A 227-amino-acid chain; its full sequence is tRNA (guanine-N(1)-)-methyltransferase (227 aa).

S-adenosyl-L-methionine contacts are provided by residues Gly112 and 131-136 (LGDFVL).

This sequence belongs to the RNA methyltransferase TrmD family. In terms of assembly, homodimer.

The protein localises to the cytoplasm. The enzyme catalyses guanosine(37) in tRNA + S-adenosyl-L-methionine = N(1)-methylguanosine(37) in tRNA + S-adenosyl-L-homocysteine + H(+). Specifically methylates guanosine-37 in various tRNAs. The polypeptide is tRNA (guanine-N(1)-)-methyltransferase (Trichodesmium erythraeum (strain IMS101)).